Here is a 533-residue protein sequence, read N- to C-terminus: Calcitonin receptor (533 aa).

The signal sequence occupies residues 1–41 (MTPRRSRVKRRNLRKPKMRFLLVNRFTLLLLLLVSPTPVLQ). Residues 42–163 (APTNLTDSGL…FTSEKLQNAY (122 aa)) are Extracellular-facing. N-linked (GlcNAc...) asparagine glycans are attached at residues N45, N90, N142, and N147. 3 cysteine pairs are disulfide-bonded: C72–C98, C89–C129, and C112–C151. The chain crosses the membrane as a helical span at residues 164–186 (VLYYLALVGHSLSIAALVASMLI). Over 187 to 198 (FWIFKNLSCQRV) the chain is Cytoplasmic. Residues 199–219 (TLHKHMFLTYILNSIIIIIHL) form a helical membrane-spanning segment. Topologically, residues 220-273 (VEVVPNGDLVRRDPMHIFHHNTHMWTMQWELSPPLPLSAHEGKMDPHASEVISC) are extracellular. C273 and C343 are joined by a disulfide. A helical transmembrane segment spans residues 274 to 296 (KVLHFLHQYMMSCNYFWMLCEGI). The Cytoplasmic segment spans residues 297–313 (YLHTLIVMAVFTDEQRL). The chain crosses the membrane as a helical span at residues 314–334 (RWYYLLGWGFPIVPTIIHAIT). The Extracellular segment spans residues 335–350 (RALYYNDNCWLSAETH). A helical transmembrane segment spans residues 351–374 (LLYIIHGPVMVALVVNFFFLLNIV). Residues 375–394 (RVLVTKMRQTHEAESYMYLK) are Cytoplasmic-facing. Residues 395–413 (AVKATMVLVPLLGIQFVVF) form a helical membrane-spanning segment. Residues 414–421 (PWRPSNKV) lie on the Extracellular side of the membrane. The helical transmembrane segment at 422–448 (LGKIYDYLMHSLIHFQGFFVATIYCFC) threads the bilayer. Residues 449-533 (NHEVQVTLKR…MNVIQQDASA (85 aa)) are Cytoplasmic-facing.

The protein belongs to the G-protein coupled receptor 2 family. In terms of assembly, heterodimer of CALCR and RAMP1, RAMP2 or RAMP3; the receptor complexes function as AMYR1, AMYR2 and AMYR3 receptors, respectively, and respond to amylin/IAPP, calcitonin/CT and CGRP1 ligands. Interacts with GPRASP2.

Its subcellular location is the cell membrane. Its function is as follows. G protein-coupled receptor activated by ligand peptides amylin (IAPP), calcitonin (CT/CALCA) and calcitonin gene-related peptide type 1 (CGRP1/CALCA). CALCR interacts with receptor-activity-modifying proteins RAMP1, 2 and 3 to form receptor complexes AMYR1, 2 and 3, respectively. IAPP, CT and CGRP1 activate CALCR and AMYRs with distinct modes of receptor activation resulting in specific phenotypes. Ligand binding causes a conformation change that triggers signaling via guanine nucleotide-binding proteins (G proteins) and modulates the activity of downstream effectors. Activates cAMP-dependent pathway. The protein is Calcitonin receptor of Mus musculus (Mouse).